A 365-amino-acid polypeptide reads, in one-letter code: Peptide chain release factor 2 (365 aa).

Gln252 is subject to N5-methylglutamine.

Belongs to the prokaryotic/mitochondrial release factor family. Post-translationally, methylated by PrmC. Methylation increases the termination efficiency of RF2.

The protein localises to the cytoplasm. Peptide chain release factor 2 directs the termination of translation in response to the peptide chain termination codons UGA and UAA. The protein is Peptide chain release factor 2 of Escherichia coli O8 (strain IAI1).